The primary structure comprises 238 residues: dITP/XTP pyrophosphatase (238 aa).

7-12 (SANQHK) is a substrate binding site. Residue aspartate 89 is the Proton acceptor of the active site. Aspartate 89 is a Mg(2+) binding site. Substrate is bound by residues serine 90, 191–194 (FGYD), lysine 217, and 222–223 (HR).

Belongs to the HAM1 NTPase family. Homodimer. It depends on Mg(2+) as a cofactor.

The enzyme catalyses XTP + H2O = XMP + diphosphate + H(+). The catalysed reaction is dITP + H2O = dIMP + diphosphate + H(+). It catalyses the reaction ITP + H2O = IMP + diphosphate + H(+). Its function is as follows. Pyrophosphatase that catalyzes the hydrolysis of nucleoside triphosphates to their monophosphate derivatives, with a high preference for the non-canonical purine nucleotides XTP (xanthosine triphosphate), dITP (deoxyinosine triphosphate) and ITP. Seems to function as a house-cleaning enzyme that removes non-canonical purine nucleotides from the nucleotide pool, thus preventing their incorporation into DNA/RNA and avoiding chromosomal lesions. The chain is dITP/XTP pyrophosphatase from Helicobacter hepaticus (strain ATCC 51449 / 3B1).